Reading from the N-terminus, the 354-residue chain is Protein-glutamate methylesterase/protein-glutamine glutaminase (354 aa).

In terms of domain architecture, Response regulatory spans 7-124 (KVLCVDDSAL…REGMLEYTEM (118 aa)). D58 carries the post-translational modification 4-aspartylphosphate. Positions 156–348 (LLSSEKVIII…AALMKRAEAS (193 aa)) constitute a CheB-type methylesterase domain. Catalysis depends on residues S168, H194, and D290.

It belongs to the CheB family. Post-translationally, phosphorylated by CheA. Phosphorylation of the N-terminal regulatory domain activates the methylesterase activity.

It localises to the cytoplasm. The catalysed reaction is [protein]-L-glutamate 5-O-methyl ester + H2O = L-glutamyl-[protein] + methanol + H(+). It carries out the reaction L-glutaminyl-[protein] + H2O = L-glutamyl-[protein] + NH4(+). Its function is as follows. Involved in chemotaxis. Part of a chemotaxis signal transduction system that modulates chemotaxis in response to various stimuli. Catalyzes the demethylation of specific methylglutamate residues introduced into the chemoreceptors (methyl-accepting chemotaxis proteins or MCP) by CheR. Also mediates the irreversible deamidation of specific glutamine residues to glutamic acid. This is Protein-glutamate methylesterase/protein-glutamine glutaminase from Chromohalobacter salexigens (strain ATCC BAA-138 / DSM 3043 / CIP 106854 / NCIMB 13768 / 1H11).